A 205-amino-acid polypeptide reads, in one-letter code: High frequency lysogenization protein HflD homolog (205 aa).

Belongs to the HflD family.

The protein resides in the cytoplasm. Its subcellular location is the cell inner membrane. In Shewanella sp. (strain MR-4), this protein is High frequency lysogenization protein HflD homolog.